A 117-amino-acid chain; its full sequence is U9-theraphotoxin-Hhn1a (117 aa).

Residues 1–21 (MNTVRVTFLLVFVLAVSLGQA) form the signal peptide. Residues 22–75 (DEDGNRMEMRQEIEKTEADSSYFAENLLLQKLEELEAKLWEETSEESRNSRQKR) constitute a propeptide that is removed on maturation. Cystine bridges form between Cys-76-Cys-94, Cys-83-Cys-99, and Cys-93-Cys-114.

This sequence belongs to the neurotoxin 14 (magi-1) family. 01 (HNTX-16) subfamily. In terms of tissue distribution, expressed by the venom gland.

Its subcellular location is the secreted. In terms of biological role, probable ion channel inhibitor. This is U9-theraphotoxin-Hhn1a from Cyriopagopus hainanus (Chinese bird spider).